Reading from the N-terminus, the 279-residue chain is UTP--glucose-1-phosphate uridylyltransferase (279 aa).

It belongs to the UDPGP type 2 family.

It catalyses the reaction alpha-D-glucose 1-phosphate + UTP + H(+) = UDP-alpha-D-glucose + diphosphate. Its function is as follows. May play a role in stationary phase survival. This Pseudomonas aeruginosa protein is UTP--glucose-1-phosphate uridylyltransferase (galU).